A 96-amino-acid chain; its full sequence is Cobalt transport protein CbiN (96 aa).

2 helical membrane passes run 4–24 and 59–79; these read WLAA…VSAG and IESL…GYYL.

The protein belongs to the CbiN family. In terms of assembly, forms an energy-coupling factor (ECF) transporter complex composed of an ATP-binding protein (A component, CbiO), a transmembrane protein (T component, CbiQ) and 2 possible substrate-capture proteins (S components, CbiM and CbiN) of unknown stoichimetry.

The protein resides in the cell membrane. Its pathway is cofactor biosynthesis; adenosylcobalamin biosynthesis. In terms of biological role, part of the energy-coupling factor (ECF) transporter complex CbiMNOQ involved in cobalt import. This Halobacterium salinarum (strain ATCC 29341 / DSM 671 / R1) protein is Cobalt transport protein CbiN.